The primary structure comprises 213 residues: Uridine kinase (213 aa).

Glycine 15–serine 22 contributes to the ATP binding site.

This sequence belongs to the uridine kinase family.

Its subcellular location is the cytoplasm. It catalyses the reaction uridine + ATP = UMP + ADP + H(+). It carries out the reaction cytidine + ATP = CMP + ADP + H(+). It functions in the pathway pyrimidine metabolism; CTP biosynthesis via salvage pathway; CTP from cytidine: step 1/3. The protein operates within pyrimidine metabolism; UMP biosynthesis via salvage pathway; UMP from uridine: step 1/1. This chain is Uridine kinase, found in Escherichia coli O157:H7.